The chain runs to 152 residues: Membrane-spanning 4-domains subfamily A member 13 (152 aa).

Transmembrane regions (helical) follow at residues 1–21 (MIGIFHIFMWYFLLVLYMGQI), 32–52 (TYKTGCTLWGIFFIIAGVFLI), 66–86 (TLIINIICIITTITAVTLTII), and 111–131 (ILLFFYGLEFSIALTHSIYSC).

It belongs to the MS4A family.

Its subcellular location is the membrane. Its function is as follows. May be involved in signal transduction as a component of a multimeric receptor complex. This Homo sapiens (Human) protein is Membrane-spanning 4-domains subfamily A member 13 (MS4A13).